The sequence spans 358 residues: 3-O-methylredipecamine 2-O-methyltransferase IpeOMT3 (358 aa).

S-adenosyl-L-methionine-binding residues include Gly193, Asp216, Asp236, Met237, and Lys250. Residue His254 is the Proton acceptor of the active site.

It belongs to the class I-like SAM-binding methyltransferase superfamily. Cation-independent O-methyltransferase family. In terms of tissue distribution, expressed in roots.

It localises to the cytoplasm. It is found in the cytosol. It carries out the reaction (S)-reticuline + S-adenosyl-L-methionine = (S)-laudanine + S-adenosyl-L-homocysteine + H(+). It participates in alkaloid biosynthesis. Its function is as follows. O-methyltransferase involved in the biosynthesis of ipecac and benzylisoquinoline monoterpenoid-isoquinoline alkaloids natural products, starting by the condensation of dopamine and secologanin, and including emetine and cephaeline, drugs used both as anti-protozoal (e.g. treatment of ameobiasis) and as emetic agents. Catalyzes 2-O-methylation of 3-O-methylredipecamine and, with less efficiency, the 7-O-methylation of (S)-coclaurine, (R,S)-N-methylcoclaurine, (R,S)-4'-O-methylcoclaurine, (R,S)-6-O-methyllaudanosoline, nororientaline, (S)-norreticuline and (S)-reticuline. This Carapichea ipecacuanha (Ipecac) protein is 3-O-methylredipecamine 2-O-methyltransferase IpeOMT3.